A 145-amino-acid polypeptide reads, in one-letter code: 3-hydroxyacyl-[acyl-carrier-protein] dehydratase FabZ (145 aa).

Residue His-49 is part of the active site.

This sequence belongs to the thioester dehydratase family. FabZ subfamily.

The protein resides in the cytoplasm. The enzyme catalyses a (3R)-hydroxyacyl-[ACP] = a (2E)-enoyl-[ACP] + H2O. Involved in unsaturated fatty acids biosynthesis. Catalyzes the dehydration of short chain beta-hydroxyacyl-ACPs and long chain saturated and unsaturated beta-hydroxyacyl-ACPs. This Rickettsia typhi (strain ATCC VR-144 / Wilmington) protein is 3-hydroxyacyl-[acyl-carrier-protein] dehydratase FabZ.